We begin with the raw amino-acid sequence, 162 residues long: Large ribosomal subunit protein uL10 (162 aa).

This sequence belongs to the universal ribosomal protein uL10 family. In terms of assembly, part of the ribosomal stalk of the 50S ribosomal subunit. The N-terminus interacts with L11 and the large rRNA to form the base of the stalk. The C-terminus forms an elongated spine to which L12 dimers bind in a sequential fashion forming a multimeric L10(L12)X complex.

Its function is as follows. Forms part of the ribosomal stalk, playing a central role in the interaction of the ribosome with GTP-bound translation factors. This is Large ribosomal subunit protein uL10 from Vibrio vulnificus (strain CMCP6).